We begin with the raw amino-acid sequence, 340 residues long: Flap endonuclease 1 (340 aa).

An N-domain region spans residues 1-98 (MGLNLKDLVV…AEIERRKQIK (98 aa)). Mg(2+)-binding residues include Asp-27, Asp-80, Glu-152, Glu-154, Asp-173, Asp-175, and Asp-236. The tract at residues 116-258 (DARKYAQQTT…TALKMIKQHS (143 aa)) is I-domain.

Belongs to the XPG/RAD2 endonuclease family. FEN1 subfamily. As to quaternary structure, interacts with PCNA. PCNA stimulates the nuclease activity without altering cleavage specificity. Requires Mg(2+) as cofactor.

Its function is as follows. Structure-specific nuclease with 5'-flap endonuclease and 5'-3' exonuclease activities involved in DNA replication and repair. During DNA replication, cleaves the 5'-overhanging flap structure that is generated by displacement synthesis when DNA polymerase encounters the 5'-end of a downstream Okazaki fragment. Binds the unpaired 3'-DNA end and kinks the DNA to facilitate 5' cleavage specificity. Cleaves one nucleotide into the double-stranded DNA from the junction in flap DNA, leaving a nick for ligation. Also involved in the base excision repair (BER) pathway. Acts as a genome stabilization factor that prevents flaps from equilibrating into structures that lead to duplications and deletions. Also possesses 5'-3' exonuclease activity on nicked or gapped double-stranded DNA. The polypeptide is Flap endonuclease 1 (Nitrosopumilus maritimus (strain SCM1)).